Here is an 807-residue protein sequence, read N- to C-terminus: Glycerol-3-phosphate acyltransferase (807 aa).

The HXXXXD motif motif lies at 305-310 (CHRSHM).

Belongs to the GPAT/DAPAT family.

It localises to the cell inner membrane. The catalysed reaction is sn-glycerol 3-phosphate + an acyl-CoA = a 1-acyl-sn-glycero-3-phosphate + CoA. The protein operates within phospholipid metabolism; CDP-diacylglycerol biosynthesis; CDP-diacylglycerol from sn-glycerol 3-phosphate: step 1/3. The chain is Glycerol-3-phosphate acyltransferase from Aliivibrio fischeri (strain MJ11) (Vibrio fischeri).